The chain runs to 357 residues: Aurora kinase A- and ninein-interacting protein (357 aa).

A compositionally biased stretch (polar residues) spans 71–91 (LQPGKTNGSDQKSVSSHTESQ). The disordered stretch occupies residues 71–98 (LQPGKTNGSDQKSVSSHTESQINKESKK). Positions 187–357 (RKEEKGDSAR…EGNQVIRHQF (171 aa)) are interaction with AURKA. Phosphoserine occurs at positions 267 and 292. The segment at 281 to 357 (KDSWSQLFTE…EGNQVIRHQF (77 aa)) is interaction with RBBP8/CtIP.

Belongs to the AUNIP family. In terms of assembly, interacts (via C-terminus) with AURKA (via C-terminus). Interacts (via N-terminus) with NIN; this interaction blocks NIN phosphorylation by both AURKA and GSK3B. Identified in a complex with NIN and AURKA. Interacts with RBBP8/CtIP. In terms of tissue distribution, expressed in heart, skeletal muscles, placenta and testis.

Its subcellular location is the nucleus. It localises to the chromosome. The protein localises to the cytoplasm. It is found in the cytoskeleton. The protein resides in the microtubule organizing center. Its subcellular location is the centrosome. It localises to the spindle pole. Its function is as follows. DNA-binding protein that accumulates at DNA double-strand breaks (DSBs) following DNA damage and promotes DNA resection and homologous recombination. Serves as a sensor of DNA damage: binds DNA with a strong preference for DNA substrates that mimic structures generated at stalled replication forks, and anchors RBBP8/CtIP to DSB sites to promote DNA end resection and ensuing homologous recombination repair. Inhibits non-homologous end joining (NHEJ). Required for the dynamic movement of AURKA at the centrosomes and spindle apparatus during the cell cycle. This Homo sapiens (Human) protein is Aurora kinase A- and ninein-interacting protein.